Reading from the N-terminus, the 248-residue chain is Putative mutator protein MutT4 (248 aa).

The segment at 1-64 is disordered; the sequence is MSDGEQAKSR…GSTRMRTVHE (64 aa). Positions 9–20 are enriched in basic residues; it reads SRRRRGRRRGRR. Residues 31–44 are compositionally biased toward low complexity; sequence AQPAGDATPTPATA. Residues 45 to 57 show a composition bias toward basic residues; the sequence is KRSRSRSPRRGST. Residues 62 to 198 enclose the Nudix hydrolase domain; sequence VHETSAGGLV…DERRLAEVAD (137 aa). Gly103, Glu118, Glu121, and Glu122 together coordinate Mg(2+). Positions 103-124 match the Nudix box motif; it reads GHIELGETAEQTAIREVAEETG. A disordered region spans residues 204–248; sequence LQSDGPAALPPLPPSSPRRRPQTHSRARHADDSAPGQHNGPGPGP. Basic residues predominate over residues 220 to 230; the sequence is PRRRPQTHSRA.

The protein belongs to the Nudix hydrolase family. Requires Mg(2+) as cofactor. The cofactor is Mn(2+).

In terms of biological role, may be involved in the GO system responsible for removing an oxidatively damaged form of guanine (7,8-dihydro-8-oxoguanine, 8-oxo-dGTP) from DNA and the nucleotide pool. This Mycobacterium tuberculosis (strain CDC 1551 / Oshkosh) protein is Putative mutator protein MutT4 (mutT4).